The primary structure comprises 940 residues: Fibronectin-binding protein B (940 aa).

The first 36 residues, 1 to 36 (MKSNLRYGIRKHKLGAASVFLGTMIVVGMGQEKEAA), serve as a signal peptide directing secretion. Residues 36–111 (AASEQNNTTV…PKVETSRVDL (76 aa)) form a disordered region. Residues 38–92 (SEQNNTTVEESGSSATESKASETQTTTNNVNTIDETQSYSATSTEQPSQSTQVTT) show a composition bias toward polar residues. A fibrinogen/elastin/tropoelastin-binding region spans residues 162–480 (TGTDVTNKVE…AQGDGKDKLK (319 aa)). 3 disordered regions span residues 676 to 746 (LGYE…NIID), 764 to 878 (IIEE…GKVV), and 892 to 918 (VPTKKAQSKKSELPETGGEESTNNGML). The D-1 repeat unit spans residues 681–718 (GQNSGNQSFEEDTEEDKPKYEQGGNIVDIDFDSVPQIH). The D-2 repeat unit spans residues 719 to 756 (GQNNGNQSFEEDTEKDKPKYEQGGNIIDIDFDSVPHIH). Residues 757–795 (GFNKHTEIIEEDTNKDKPNYQFGGHNSVDFEEDTLPQVS) form a D-3 repeat. Over residues 764-774 (IIEEDTNKDKP) the composition is skewed to basic and acidic residues. Over residues 792–802 (PQVSGHNEGQQ) the composition is skewed to polar residues. The stretch at 796 to 814 (GHNEGQQTIEEDTTPPIVP) is one D-4; truncated repeat. Over residues 811 to 860 (PIVPPTPPTPEVPSEPETPTPPTPEVPSEPETPTPPTPEVPTEPGKPIPP) the composition is skewed to pro residues. WR repeat units lie at residues 815-828 (PTPPTPEVPSEPET), 829-842 (PTPPTPEVPSEPET), and 857-870 (PIPPAKEEPKKPSK). The short motif at 904–908 (LPETG) is the LPXTG sorting signal element. At Thr-907 the chain carries Pentaglycyl murein peptidoglycan amidated threonine. The propeptide at 908–940 (GGEESTNNGMLFGGLFSILGLALLRRNKKNHKA) is removed by sortase.

As to quaternary structure, interacts with host PLG; this interaction provides active plasmin on the surface of bacteria cells. Interacts with host histones.

Its subcellular location is the secreted. It is found in the cell wall. Multifunctional protein which promotes bacterial attachment to fibrinogen, elastin and fibronectin. Also promotes the accumulation phase and the primary attachment phase of biofilm formation. In addition, protects against the antimicrobial activity of histones. Mechanistically, captures histones and prevents them from reaching the bacterial membrane and simultaneously binds plasminogen, thereby promoting its conversion to plasmin to destroy the bound histones. The polypeptide is Fibronectin-binding protein B (Staphylococcus aureus (strain USA300)).